The primary structure comprises 446 residues: Tetratricopeptide repeat protein 23 (446 aa).

4 TPR repeats span residues 45 to 78, 137 to 170, 186 to 219, and 356 to 389; these read LHLCEERAKSYSSIREYKQAIQELVRCVALTKIC, LELFYTLGKALVSLQKFKEAWENLIKAERLSKEM, SRIKLSFAQLYQGQKRSKEAFPYYQKALEYTETT, and AETYRILGRADLAQGNNNGAHMKLKKCVQIETFL.

In terms of assembly, associated with the EvC complex composed of EFCAB7, IQCE, EVC2 and EVC.

Its subcellular location is the cell projection. The protein localises to the cilium. In terms of biological role, participates positively in the ciliary Hedgehog (Hh) signaling. The protein is Tetratricopeptide repeat protein 23 (Ttc23) of Rattus norvegicus (Rat).